Here is a 370-residue protein sequence, read N- to C-terminus: UDP-N-acetylglucosamine--N-acetylmuramyl-(pentapeptide) pyrophosphoryl-undecaprenol N-acetylglucosamine transferase (370 aa).

Residues threonine 10–glycine 12, asparagine 126, serine 200, isoleucine 255, and glutamine 300 contribute to the UDP-N-acetyl-alpha-D-glucosamine site.

Belongs to the glycosyltransferase 28 family. MurG subfamily.

The protein localises to the cell membrane. It carries out the reaction Mur2Ac(oyl-L-Ala-gamma-D-Glu-L-Lys-D-Ala-D-Ala)-di-trans,octa-cis-undecaprenyl diphosphate + UDP-N-acetyl-alpha-D-glucosamine = beta-D-GlcNAc-(1-&gt;4)-Mur2Ac(oyl-L-Ala-gamma-D-Glu-L-Lys-D-Ala-D-Ala)-di-trans,octa-cis-undecaprenyl diphosphate + UDP + H(+). It functions in the pathway cell wall biogenesis; peptidoglycan biosynthesis. In terms of biological role, cell wall formation. Catalyzes the transfer of a GlcNAc subunit on undecaprenyl-pyrophosphoryl-MurNAc-pentapeptide (lipid intermediate I) to form undecaprenyl-pyrophosphoryl-MurNAc-(pentapeptide)GlcNAc (lipid intermediate II). The chain is UDP-N-acetylglucosamine--N-acetylmuramyl-(pentapeptide) pyrophosphoryl-undecaprenol N-acetylglucosamine transferase from Lactobacillus delbrueckii subsp. bulgaricus (strain ATCC 11842 / DSM 20081 / BCRC 10696 / JCM 1002 / NBRC 13953 / NCIMB 11778 / NCTC 12712 / WDCM 00102 / Lb 14).